Here is a 379-residue protein sequence, read N- to C-terminus: 3-dehydroquinate synthase (379 aa).

Belongs to the archaeal-type DHQ synthase family.

The enzyme catalyses 2-amino-2,3,7-trideoxy-D-lyxo-hept-6-ulosonate + NAD(+) + H2O = 3-dehydroquinate + NH4(+) + NADH + H(+). Functionally, catalyzes the oxidative deamination and cyclization of 2-amino-3,7-dideoxy-D-threo-hept-6-ulosonic acid (ADH) to yield 3-dehydroquinate (DHQ), which is fed into the canonical shikimic pathway of aromatic amino acid biosynthesis. The sequence is that of 3-dehydroquinate synthase from Methanococcoides burtonii (strain DSM 6242 / NBRC 107633 / OCM 468 / ACE-M).